Here is a 243-residue protein sequence, read N- to C-terminus: MRIDVLSLFPDMFAPMRQSIIGKAIDKGALDFQVTDFRDFTENKHNNVDDYPFGGGAGMLLTPQPIFDAMASVEKQAGGKGRVILLDPAGRQFNHEVAQELATYDHLTFVAGHYEGYDERIRELVDDEISLGDYVLTGGELGAMVIIDATVRFLPEILGNAASAEGDSFEDGLLEFPQYTRPADFRGRMVPEVLTSGNHAKIAEWRLKESLRRTYLRRPDLLEKRQLTQQERDLLDNIKSEEQ.

Residues G112 and 131–136 (LGDYVL) each bind S-adenosyl-L-methionine.

The protein belongs to the RNA methyltransferase TrmD family. Homodimer.

It is found in the cytoplasm. The enzyme catalyses guanosine(37) in tRNA + S-adenosyl-L-methionine = N(1)-methylguanosine(37) in tRNA + S-adenosyl-L-homocysteine + H(+). In terms of biological role, specifically methylates guanosine-37 in various tRNAs. This Leuconostoc mesenteroides subsp. mesenteroides (strain ATCC 8293 / DSM 20343 / BCRC 11652 / CCM 1803 / JCM 6124 / NCDO 523 / NBRC 100496 / NCIMB 8023 / NCTC 12954 / NRRL B-1118 / 37Y) protein is tRNA (guanine-N(1)-)-methyltransferase.